The sequence spans 204 residues: Methyl-CpG-binding domain-containing protein 1 (204 aa).

Residues 1–46 form a disordered region; that stretch reads MLPFPAMNLKKSRSENSSVASSGSKIEEQTEKSAEPTTIKVQKKAG. Over residues 15 to 24 the composition is skewed to polar residues; sequence ENSSVASSGS. The segment covering 25–34 has biased composition (basic and acidic residues); sequence KIEEQTEKSA. The segment at 49–104 adopts a CW-type zinc-finger fold; the sequence is GRSIDVFAVQCEKCMKWRKIDTQDEYEDIRSRVQEDPFFCKTKEGVSCEDVGDLNY. The MBD-associated domain (MAD) signature appears at 58 to 96; sequence QCEKCMKWRKIDTQDEYEDIRSRVQEDPFFCKTKEGVSC. Residues C59, C62, C88, and C96 each contribute to the Zn(2+) site. Residues 110–180 form the MBD domain; sequence WVIDKPGLPR…GDFNFTVPKV (71 aa).

In terms of tissue distribution, mostly expressed in flowers and buds.

It localises to the nucleus. Its function is as follows. Probable transcriptional regulator. The protein is Methyl-CpG-binding domain-containing protein 1 (MBD1) of Arabidopsis thaliana (Mouse-ear cress).